Consider the following 102-residue polypeptide: NADH-quinone oxidoreductase subunit K 1 (102 aa).

Transmembrane regions (helical) follow at residues 3 to 23 (TLTTYLVIAAVLFCLGLLGIL), 29 to 49 (VGMLISLELMLNGANLNFMAF), and 62 to 82 (IIALIVMGLAAAEAAIGLSII).

The protein belongs to the complex I subunit 4L family. In terms of assembly, NDH-1 is composed of 14 different subunits. Subunits NuoA, H, J, K, L, M, N constitute the membrane sector of the complex.

The protein localises to the cell inner membrane. It catalyses the reaction a quinone + NADH + 5 H(+)(in) = a quinol + NAD(+) + 4 H(+)(out). Its function is as follows. NDH-1 shuttles electrons from NADH, via FMN and iron-sulfur (Fe-S) centers, to quinones in the respiratory chain. The immediate electron acceptor for the enzyme in this species is believed to be ubiquinone. Couples the redox reaction to proton translocation (for every two electrons transferred, four hydrogen ions are translocated across the cytoplasmic membrane), and thus conserves the redox energy in a proton gradient. In Syntrophobacter fumaroxidans (strain DSM 10017 / MPOB), this protein is NADH-quinone oxidoreductase subunit K 1.